We begin with the raw amino-acid sequence, 511 residues long: ADP,ATP carrier protein 4 (511 aa).

A run of 12 helical transmembrane segments spans residues 34–54, 71–91, 102–122, 157–177, 192–212, 231–251, 296–316, 330–350, 361–381, 390–410, 453–473, and 476–496; these read VSKF…QNLI, ISFL…AIYV, IFYL…YVIF, FSLF…LLFW, FYPL…QFLE, FHTL…IIAI, LIAT…GPWK, AAFI…FVVL, FTAA…FFAV, LIIA…IGAI, LGKS…PSAS, and SISI…LWAT.

Belongs to the ADP/ATP translocase tlc family.

It is found in the cell membrane. In terms of biological role, provides the rickettsial cell with host ATP in exchange for rickettsial ADP. This is an obligate exchange system. This energy acquiring activity is an important component of rickettsial parasitism. The chain is ADP,ATP carrier protein 4 (tlcD) from Rickettsia felis (strain ATCC VR-1525 / URRWXCal2) (Rickettsia azadi).